The following is a 407-amino-acid chain: Methylthioribose kinase (407 aa).

ATP-binding positions include Asn40, Lys57, and 111-113 (EDL). Position 229 (Asp229) interacts with substrate. 246-248 (DAE) contacts ATP. Arg344 provides a ligand contact to substrate.

Belongs to the methylthioribose kinase family. In terms of assembly, homodimer.

The catalysed reaction is 5-(methylsulfanyl)-D-ribose + ATP = 5-(methylsulfanyl)-alpha-D-ribose 1-phosphate + ADP + H(+). Its pathway is amino-acid biosynthesis; L-methionine biosynthesis via salvage pathway; S-methyl-5-thio-alpha-D-ribose 1-phosphate from S-methyl-5'-thioadenosine (hydrolase route): step 2/2. Its function is as follows. Catalyzes the phosphorylation of methylthioribose into methylthioribose-1-phosphate. This chain is Methylthioribose kinase, found in Yersinia pseudotuberculosis serotype IB (strain PB1/+).